Reading from the N-terminus, the 87-residue chain is UPF0367 protein P9303_26451 (87 aa).

This sequence belongs to the UPF0367 family.

The sequence is that of UPF0367 protein P9303_26451 from Prochlorococcus marinus (strain MIT 9303).